Here is a 509-residue protein sequence, read N- to C-terminus: ATP synthase subunit alpha (509 aa).

171-178 lines the ATP pocket; that stretch reads GDRKTGKT.

It belongs to the ATPase alpha/beta chains family. As to quaternary structure, F-type ATPases have 2 components, CF(1) - the catalytic core - and CF(0) - the membrane proton channel. CF(1) has five subunits: alpha(3), beta(3), gamma(1), delta(1), epsilon(1). CF(0) has three main subunits: a(1), b(2) and c(9-12). The alpha and beta chains form an alternating ring which encloses part of the gamma chain. CF(1) is attached to CF(0) by a central stalk formed by the gamma and epsilon chains, while a peripheral stalk is formed by the delta and b chains.

The protein localises to the cell inner membrane. The enzyme catalyses ATP + H2O + 4 H(+)(in) = ADP + phosphate + 5 H(+)(out). Its function is as follows. Produces ATP from ADP in the presence of a proton gradient across the membrane. The alpha chain is a regulatory subunit. The protein is ATP synthase subunit alpha of Ehrlichia chaffeensis (strain ATCC CRL-10679 / Arkansas).